Here is a 119-residue protein sequence, read N- to C-terminus: Protein TusC (119 aa).

Belongs to the DsrF/TusC family. In terms of assembly, heterohexamer, formed by a dimer of trimers. The hexameric TusBCD complex contains 2 copies each of TusB, TusC and TusD. The TusBCD complex interacts with TusE.

The protein localises to the cytoplasm. Part of a sulfur-relay system required for 2-thiolation of 5-methylaminomethyl-2-thiouridine (mnm(5)s(2)U) at tRNA wobble positions. The protein is Protein TusC of Photorhabdus laumondii subsp. laumondii (strain DSM 15139 / CIP 105565 / TT01) (Photorhabdus luminescens subsp. laumondii).